Consider the following 279-residue polypeptide: uncharacterized protein (279 aa).

Disordered stretches follow at residues 50 to 109 (YTYN…YNKN) and 249 to 279 (SQSQ…SPKL). Positions 68 to 109 (NNNSNYNNNNNNNNNNNNNNNNNNNNNNNKNNNNNNYNYNKN) are enriched in low complexity.

This is an uncharacterized protein from Dictyostelium discoideum (Social amoeba).